The following is a 301-amino-acid chain: Porin (301 aa).

Homotrimer.

Its subcellular location is the cell outer membrane. Functionally, forms channels that allow the passive diffusion of small hydrophilic solutes up to an exclusion limit of about 0.6 kDa. This chain is Porin, found in Rhodobacter capsulatus (Rhodopseudomonas capsulata).